Reading from the N-terminus, the 787-residue chain is GPI ethanolamine phosphate transferase 2 (787 aa).

N33, N185, and N397 each carry an N-linked (GlcNAc...) asparagine glycan. The next 3 membrane-spanning stretches (helical) occupy residues 400–420 (FLTYGTTLMIIGTLIVTVWNF), 426–446 (YIEHVGTSVLLGISMFASSFI), and 455–475 (WITISVLLLMQISNGKKLVVL). N-linked (GlcNAc...) asparagine glycosylation is present at N485. The next 2 membrane-spanning stretches (helical) occupy residues 504–524 (HTSVLWWLNVVTFLSVGFPFL) and 536–556 (LLSVSFLALSSITYKICFAIV). A glycan (N-linked (GlcNAc...) asparagine) is linked at N581. Residues 591–611 (LVPIARIFFQICGVSIIILLF) traverse the membrane as a helical segment. An N-linked (GlcNAc...) asparagine glycan is attached at N617. Residues 629-651 (VIKFVLLLQTSSANIPLFLIFEI) traverse the membrane as a helical segment. An N-linked (GlcNAc...) asparagine glycan is attached at N669. Helical transmembrane passes span 671-693 (TFFQFGGTNSIATVNLTNAYNGV), 699-719 (IYVVGVLMFLSNYAPSIYWAL), 740-760 (GTCLMIACIALRYHLFIWSVF), and 767-787 (YAAWSLYNVVMDFAITLLGVL).

The protein belongs to the PIGG/PIGN/PIGO family. PIGG subfamily.

It is found in the endoplasmic reticulum membrane. It functions in the pathway glycolipid biosynthesis; glycosylphosphatidylinositol-anchor biosynthesis. Ethanolamine phosphate transferase involved in glycosylphosphatidylinositol-anchor biosynthesis. Transfers ethanolamine phosphate to the GPI second mannose. The chain is GPI ethanolamine phosphate transferase 2 (LAS21) from Kluyveromyces lactis (strain ATCC 8585 / CBS 2359 / DSM 70799 / NBRC 1267 / NRRL Y-1140 / WM37) (Yeast).